The sequence spans 297 residues: 6-dehydroglucose reductase (297 aa).

Residues W20, R21, and D49 each coordinate NADP(+). Y54 (proton donor) is an active-site residue. D-glucose-binding residues include Y54, K98, H129, and R130. Residues S159, N160, Q181, S211, L213, G215, G261, T262, N263, and R267 each coordinate NADP(+).

This sequence belongs to the aldo/keto reductase family. Homotrimer.

The enzyme catalyses D-glucose + NADP(+) = 6-dehydro-D-glucose + NADPH + H(+). Functionally, part of the sulfoquinovose monooxygenase (sulfo-SMO) pathway, a D-sulfoquinovose degradation pathway that enables the complete utilization of all carbons within sulfoquinovose (SQ) with concomitant production of inorganic sulfite. Catalyzes the NADP-dependent reduction of 6-dehydro-D-glucose to D-glucose. Cannot use NADH. The protein is 6-dehydroglucose reductase of Agrobacterium fabrum (strain C58 / ATCC 33970) (Agrobacterium tumefaciens (strain C58)).